The primary structure comprises 463 residues: Glutamate--tRNA ligase 1 (463 aa).

Positions 10–20 (PSPTGYLHIGG) match the 'HIGH' region motif. Residues 238 to 242 (KLSKR) carry the 'KMSKS' region motif. Lysine 241 provides a ligand contact to ATP.

It belongs to the class-I aminoacyl-tRNA synthetase family. Glutamate--tRNA ligase type 1 subfamily. In terms of assembly, monomer.

Its subcellular location is the cytoplasm. It catalyses the reaction tRNA(Glu) + L-glutamate + ATP = L-glutamyl-tRNA(Glu) + AMP + diphosphate. Catalyzes the attachment of glutamate to tRNA(Glu) in a two-step reaction: glutamate is first activated by ATP to form Glu-AMP and then transferred to the acceptor end of tRNA(Glu). This is Glutamate--tRNA ligase 1 from Helicobacter pylori (strain Shi470).